The following is a 161-amino-acid chain: SsrA-binding protein (161 aa).

This sequence belongs to the SmpB family.

It localises to the cytoplasm. Required for rescue of stalled ribosomes mediated by trans-translation. Binds to transfer-messenger RNA (tmRNA), required for stable association of tmRNA with ribosomes. tmRNA and SmpB together mimic tRNA shape, replacing the anticodon stem-loop with SmpB. tmRNA is encoded by the ssrA gene; the 2 termini fold to resemble tRNA(Ala) and it encodes a 'tag peptide', a short internal open reading frame. During trans-translation Ala-aminoacylated tmRNA acts like a tRNA, entering the A-site of stalled ribosomes, displacing the stalled mRNA. The ribosome then switches to translate the ORF on the tmRNA; the nascent peptide is terminated with the 'tag peptide' encoded by the tmRNA and targeted for degradation. The ribosome is freed to recommence translation, which seems to be the essential function of trans-translation. This Baumannia cicadellinicola subsp. Homalodisca coagulata protein is SsrA-binding protein.